The chain runs to 189 residues: Protein Flattop (189 aa).

The interval 112–189 is disordered; sequence EISGKPFDPD…PPPSPCKSTK (78 aa). Over residues 137-148 the composition is skewed to polar residues; sequence APNPTIIPSSPV. Pro residues predominate over residues 178–189; the sequence is NNPPPSPCKSTK.

Belongs to the Flattop family. As to quaternary structure, microtubule inner protein component of sperm flagellar doublet microtubules. Interacts with DLG3. In terms of tissue distribution, expressed in mono- and multiciliated tissues during planar cell polarity acquisition.

Its subcellular location is the cytoplasm. It localises to the cytoskeleton. It is found in the cilium basal body. The protein resides in the cilium axoneme. The protein localises to the flagellum axoneme. Its subcellular location is the apical cell membrane. Its function is as follows. Microtubule inner protein (MIP) part of the dynein-decorated doublet microtubules (DMTs) in cilia axoneme. Acts as a regulator of cilium basal body docking and positioning in mono- and multiciliated cells. Regulates basal body docking and cilia formation in multiciliated lung cells. Regulates kinocilium positioning and stereocilia bundle morphogenesis in the inner ear. The sequence is that of Protein Flattop from Mus musculus (Mouse).